A 548-amino-acid polypeptide reads, in one-letter code: Chaperonin GroEL (548 aa).

ATP contacts are provided by residues 30 to 33 (TLGP), lysine 51, 87 to 91 (DGTTT), glycine 415, and aspartate 495.

Belongs to the chaperonin (HSP60) family. In terms of assembly, forms a cylinder of 14 subunits composed of two heptameric rings stacked back-to-back. Interacts with the co-chaperonin GroES.

The protein localises to the cytoplasm. The enzyme catalyses ATP + H2O + a folded polypeptide = ADP + phosphate + an unfolded polypeptide.. Together with its co-chaperonin GroES, plays an essential role in assisting protein folding. The GroEL-GroES system forms a nano-cage that allows encapsulation of the non-native substrate proteins and provides a physical environment optimized to promote and accelerate protein folding. The chain is Chaperonin GroEL from Photorhabdus laumondii subsp. laumondii (strain DSM 15139 / CIP 105565 / TT01) (Photorhabdus luminescens subsp. laumondii).